The sequence spans 928 residues: Protein naked cuticle (928 aa).

The span at 68–80 (IITTPPGNASGAG) shows a compositional bias: polar residues. The segment at 68 to 133 (IITTPPGNAS…SNGKHGKYSN (66 aa)) is disordered. Basic residues predominate over residues 84-101 (QSHHQTNHHSSGRSHPGH). A compositionally biased stretch (polar residues) spans 120 to 133 (ISSTSNGKHGKYSN). Residues 177–253 (EFTCDVSVEG…TVSPEGKSKS (77 aa)) form an interaction with dsh region. In terms of domain architecture, EF-hand spans 188 to 224 (KSSQPLQFSFTFYDLDGHHGKITKDDIVGIVYTIYES). Residues 227–372 (KSVVVPHCGS…ARYHQKNNSR (146 aa)) form an important for binding to zinc region. Disordered regions lie at residues 291–368 (GVGS…YHQK), 462–543 (VGND…KSAE), 578–600 (NVSP…QRCN), 614–668 (PVAQ…HPQP), and 779–825 (LQQK…GSKI). The segment covering 307–317 (RRQHRYRPRKL) has biased composition (basic residues). Serine 320, serine 327, and serine 329 each carry phosphoserine. The segment covering 353–368 (GKSHHHQSQSARYHQK) has biased composition (basic residues). The segment covering 484-493 (QPQSLNHKSA) has biased composition (polar residues). The span at 525-538 (HQHQQQNQQQQQQQ) shows a compositional bias: low complexity. The required for nuclear localization and inhibition of Wnt signaling stretch occupies residues 543-572 (ECWKSALNRNDLISIIRESMEKNRLCFQLN). 2 stretches are compositionally biased toward low complexity: residues 583–598 (RQPA…QRQR) and 624–649 (SPPT…GQQH). A compositionally biased stretch (basic residues) spans 650-663 (HPTHPTHPSHHNHH). Positions 802–811 (QPKDASRSEQ) are enriched in basic and acidic residues. A compositionally biased stretch (polar residues) spans 812-822 (RPPTSNSSSAG).

Belongs to the NKD family. In terms of assembly, interacts with dsh. This interaction may be stabilized by zinc.

It is found in the cell membrane. The protein resides in the cytoplasm. The protein localises to the nucleus. Cell autonomous antagonist of the canonical Wnt signaling pathway. May activate a second Wnt signaling pathway that controls planar cell polarity. Required for neuroblast specification. This chain is Protein naked cuticle (nkd), found in Drosophila melanogaster (Fruit fly).